Here is a 118-residue protein sequence, read N- to C-terminus: MEKIKKFLIQLLNMRARNTVDIIASIVGAVIIAAAISALLFSIASFLGFYSKDLSPLVYSIVSLAVIPVLRRNVPKKPILSLLTAFSIPILFLSGVEWLKLVASVLLGYLAASSLKDS.

3 helical membrane passes run 22 to 44 (IIAS…FSIA), 54 to 71 (LSPL…PVLR), and 78 to 99 (PILS…VEWL).

It localises to the cell membrane. This is an uncharacterized protein from Archaeoglobus fulgidus (strain ATCC 49558 / DSM 4304 / JCM 9628 / NBRC 100126 / VC-16).